The chain runs to 367 residues: UDP-N-acetylglucosamine--N-acetylmuramyl-(pentapeptide) pyrophosphoryl-undecaprenol N-acetylglucosamine transferase (367 aa).

UDP-N-acetyl-alpha-D-glucosamine is bound by residues 10–12, N124, S196, and Q300; that span reads TGG.

This sequence belongs to the glycosyltransferase 28 family. MurG subfamily.

It is found in the cell membrane. It carries out the reaction di-trans,octa-cis-undecaprenyl diphospho-N-acetyl-alpha-D-muramoyl-L-alanyl-D-glutamyl-meso-2,6-diaminopimeloyl-D-alanyl-D-alanine + UDP-N-acetyl-alpha-D-glucosamine = di-trans,octa-cis-undecaprenyl diphospho-[N-acetyl-alpha-D-glucosaminyl-(1-&gt;4)]-N-acetyl-alpha-D-muramoyl-L-alanyl-D-glutamyl-meso-2,6-diaminopimeloyl-D-alanyl-D-alanine + UDP + H(+). It functions in the pathway cell wall biogenesis; peptidoglycan biosynthesis. Functionally, cell wall formation. Catalyzes the transfer of a GlcNAc subunit on undecaprenyl-pyrophosphoryl-MurNAc-pentapeptide (lipid intermediate I) to form undecaprenyl-pyrophosphoryl-MurNAc-(pentapeptide)GlcNAc (lipid intermediate II). This is UDP-N-acetylglucosamine--N-acetylmuramyl-(pentapeptide) pyrophosphoryl-undecaprenol N-acetylglucosamine transferase from Natranaerobius thermophilus (strain ATCC BAA-1301 / DSM 18059 / JW/NM-WN-LF).